Consider the following 446-residue polypeptide: Tubulin beta-6 chain (446 aa).

The MREI motif signature appears at 1–4; the sequence is MREI. GTP-binding residues include Gln-11, Glu-69, Ser-138, Gly-142, Thr-143, and Gly-144. Position 69 (Glu-69) interacts with Mg(2+). Ser-172 is subject to Phosphoserine; by CDK1. GTP contacts are provided by Asn-204 and Asn-226. Residue Glu-438 is modified to 5-glutamyl polyglutamate.

The protein belongs to the tubulin family. Dimer of alpha and beta chains. A typical microtubule is a hollow water-filled tube with an outer diameter of 25 nm and an inner diameter of 15 nM. Alpha-beta heterodimers associate head-to-tail to form protofilaments running lengthwise along the microtubule wall with the beta-tubulin subunit facing the microtubule plus end conferring a structural polarity. Microtubules usually have 13 protofilaments but different protofilament numbers can be found in some organisms and specialized cells. Mg(2+) is required as a cofactor. In terms of processing, some glutamate residues at the C-terminus are polyglutamylated, resulting in polyglutamate chains on the gamma-carboxyl group. Polyglutamylation plays a key role in microtubule severing by spastin (SPAST). SPAST preferentially recognizes and acts on microtubules decorated with short polyglutamate tails: severing activity by SPAST increases as the number of glutamates per tubulin rises from one to eight, but decreases beyond this glutamylation threshold. Glutamylation is also involved in cilia motility. Post-translationally, some glutamate residues at the C-terminus are monoglycylated but not polyglycylated due to the absence of functional TTLL10 in human. Monoglycylation is mainly limited to tubulin incorporated into cilia and flagella axonemes, which is required for their stability and maintenance. Flagella glycylation controls sperm motility. Both polyglutamylation and monoglycylation can coexist on the same protein on adjacent residues, and lowering glycylation levels increases polyglutamylation, and reciprocally. Phosphorylated on Ser-172 by CDK1 during the cell cycle, from metaphase to telophase, but not in interphase. This phosphorylation inhibits tubulin incorporation into microtubules. In terms of tissue distribution, ubiquitous. Maximal expression in breast and lung, where it represents around 10% of all beta-tubulins. Largely decreased expression in most cancerous tissues.

The protein resides in the cytoplasm. It is found in the cytoskeleton. In terms of biological role, tubulin is the major constituent of microtubules, a cylinder consisting of laterally associated linear protofilaments composed of alpha- and beta-tubulin heterodimers. Microtubules grow by the addition of GTP-tubulin dimers to the microtubule end, where a stabilizing cap forms. Below the cap, tubulin dimers are in GDP-bound state, owing to GTPase activity of alpha-tubulin. This is Tubulin beta-6 chain (TUBB6) from Homo sapiens (Human).